Here is an 827-residue protein sequence, read N- to C-terminus: N-terminal kinase-like protein (827 aa).

One can recognise a Protein kinase domain in the interval 1 to 309; that stretch reads MWFWSRDPAR…PEDFCRHKIL (309 aa). HEAT repeat units lie at residues 345–383, 384–422, and 502–540; these read IIPVVVKMFSSTDRAMRIRLLQQMENFIQYLNEPTVNAQ, IFPHVVHGFMDTNPAIREQTVKSMLLLAPKLNENNLNME, and VLPVLCGVTVDPEKNVREQAFKAIRSFLDKLETVSEDPS. A compositionally biased stretch (low complexity) spans 586–624; sequence DAAASEGASAPSTASEASKPDTAPSSSAPPAAASTAPTS. The interval 586 to 827 is disordered; sequence DAAASEGASA…PLKLGVRKLD (242 aa). Residues 630–640 are compositionally biased toward basic and acidic residues; that stretch reads EKGAPDNSLDR. Residues 641–652 are compositionally biased toward acidic residues; the sequence is WDDEDWGSLEDA. The span at 667–678 shows a compositional bias: basic and acidic residues; it reads DWGHGKTQEKTV. Polar residues-rich tracts occupy residues 679–690 and 737–746; these read DFSSSRSKTKQV and NWDTSGSSGR. Residues 774–783 are compositionally biased toward acidic residues; sequence GGDDNWESVE. Positions 788-817 form a coiled coil; that stretch reads LSKAEMARKKREERQKEIEAKRAERRAAKG. Residues 792–814 show a composition bias toward basic and acidic residues; that stretch reads EMARKKREERQKEIEAKRAERRA.

It belongs to the protein kinase superfamily.

In terms of biological role, regulates COPI-mediated retrograde protein traffic at the interface between the Golgi apparatus and the endoplasmic reticulum. Involved in the maintenance of the Golgi apparatus morphology. The polypeptide is N-terminal kinase-like protein (scyl1) (Xenopus tropicalis (Western clawed frog)).